Here is a 480-residue protein sequence, read N- to C-terminus: tRNA-2-methylthio-N(6)-dimethylallyladenosine synthase (480 aa).

The 117-residue stretch at 29–145 (GSFWIQTFGC…LEALLTQVDN (117 aa)) folds into the MTTase N-terminal domain. Cysteine 38, cysteine 74, cysteine 108, cysteine 180, cysteine 184, and cysteine 187 together coordinate [4Fe-4S] cluster. Residues 166-403 (RDSTICAWVN…NALVERVALQ (238 aa)) form the Radical SAM core domain. The region spanning 406–474 (SRYSGKVEQV…AFSLSGTPCD (69 aa)) is the TRAM domain.

This sequence belongs to the methylthiotransferase family. MiaB subfamily. As to quaternary structure, monomer. The cofactor is [4Fe-4S] cluster.

It is found in the cytoplasm. It catalyses the reaction N(6)-dimethylallyladenosine(37) in tRNA + (sulfur carrier)-SH + AH2 + 2 S-adenosyl-L-methionine = 2-methylsulfanyl-N(6)-dimethylallyladenosine(37) in tRNA + (sulfur carrier)-H + 5'-deoxyadenosine + L-methionine + A + S-adenosyl-L-homocysteine + 2 H(+). Functionally, catalyzes the methylthiolation of N6-(dimethylallyl)adenosine (i(6)A), leading to the formation of 2-methylthio-N6-(dimethylallyl)adenosine (ms(2)i(6)A) at position 37 in tRNAs that read codons beginning with uridine. This chain is tRNA-2-methylthio-N(6)-dimethylallyladenosine synthase, found in Prochlorococcus marinus (strain MIT 9303).